Consider the following 134-residue polypeptide: Small ribosomal subunit protein bS6 (134 aa).

This sequence belongs to the bacterial ribosomal protein bS6 family.

Binds together with bS18 to 16S ribosomal RNA. The protein is Small ribosomal subunit protein bS6 of Chlorobium phaeobacteroides (strain BS1).